The primary structure comprises 269 residues: tRNA (guanine-N(1)-)-methyltransferase (269 aa).

S-adenosyl-L-methionine is bound by residues glycine 115 and 139–144 (LGDYVL).

This sequence belongs to the RNA methyltransferase TrmD family. In terms of assembly, homodimer.

It localises to the cytoplasm. The catalysed reaction is guanosine(37) in tRNA + S-adenosyl-L-methionine = N(1)-methylguanosine(37) in tRNA + S-adenosyl-L-homocysteine + H(+). Functionally, specifically methylates guanosine-37 in various tRNAs. The protein is tRNA (guanine-N(1)-)-methyltransferase of Pseudarthrobacter chlorophenolicus (strain ATCC 700700 / DSM 12829 / CIP 107037 / JCM 12360 / KCTC 9906 / NCIMB 13794 / A6) (Arthrobacter chlorophenolicus).